The sequence spans 15639 residues: FR901469 synthetase (15639 aa).

The 77-residue stretch at 5–81 folds into the Carrier 1 domain; that stretch reads HTSDGLRKLL…DLVDKIIEQQ (77 aa). S42 is subject to O-(pantetheine 4'-phosphoryl)serine. A compositionally biased stretch (acidic residues) spans 82–94; the sequence is LEEEEEDDDSLDN. The interval 82–105 is disordered; it reads LEEEEEDDDSLDNESERDHSQKDL. A condensation 1 region spans residues 140–553; sequence PCLSMQEGCL…RDFLPLTEDD (414 aa). The segment at 579–971 is adenylation 1; that stretch reads TISKQPDAVA…LGRRDTQVKI (393 aa). The Carrier 2 domain maps to 1108–1184; that stretch reads TPATAIEKEL…ELALVARSTT (77 aa). Residue S1145 is modified to O-(pantetheine 4'-phosphoryl)serine. An epimerase 1 region spans residues 1219-1626; the sequence is RSSNRFNQSV…TITHLVKRLA (408 aa). Residues 1667-2097 are condensation 2; that stretch reads EDVLPCTPIQ…LGNLSLLTNN (431 aa). The tract at residues 2122 to 2518 is adenylation 2; that stretch reads QEAAKEYTNA…GRRDNQIKIR (397 aa). The region spanning 2654 to 2730 is the Carrier 3 domain; that stretch reads VPATALEKQL…ELALKAKSTT (77 aa). Residue S2691 is modified to O-(pantetheine 4'-phosphoryl)serine. The interval 2761–3176 is epimerase 2; it reads VSAGEHRYNQ…TELLHRLEQM (416 aa). Residues 3215–3640 are condensation 3; the sequence is QDIYPCSPTQ…DDLIMMSPED (426 aa). Residues 3669 to 4059 are adenylation 3; that stretch reads TQPHAPAVAA…MGRIDSQIKI (391 aa). Residues 4193–4269 enclose the Carrier 4 domain; it reads PPSNDAERMV…QLAAIVTQRG (77 aa). Position 4230 is an O-(pantetheine 4'-phosphoryl)serine (S4230). A condensation 4 region spans residues 4316-4714; that stretch reads EDVYPCTPLQ…ILAHGTGLEE (399 aa). The interval 4756–5149 is adenylation 4; that stretch reads TEAASTRPDA…GRLDTQAKLR (394 aa). Residues 5284–5360 enclose the Carrier 5 domain; the sequence is EPATIMERQL…DLASHIDHHT (77 aa). O-(pantetheine 4'-phosphoryl)serine is present on S5321. Residues 5402–5802 form a condensation 5 region; the sequence is EDIYPCTPLQ…TVFAQLCDSS (401 aa). Residues 5847–6238 are adenylation 5; it reads KYPNEPAVHA…LGRRDSQMKV (392 aa). Positions 6375 to 6451 constitute a Carrier 6 domain; it reads QPSTTAEIKL…DMAKIVEEHV (77 aa). Position 6412 is an O-(pantetheine 4'-phosphoryl)serine (S6412). The tract at residues 6494-6889 is condensation 6; it reads EDVYPATPLQ…RFAKVYQQLS (396 aa). Positions 6952–7335 are adenylation 6; that stretch reads WDGSMTYAEL…GRRDTQIKIR (384 aa). One can recognise a Carrier 7 domain in the interval 7473 to 7546; it reads TAMEEQLRTV…QLALLASTDE (74 aa). The residue at position 7507 (S7507) is an O-(pantetheine 4'-phosphoryl)serine. Residues 7580–7992 form an epimerase 3 region; that stretch reads MGENRYNQSV…SKTLEELTTQ (413 aa). The condensation 7 stretch occupies residues 8034–8459; that stretch reads EDVFPASPMQ…QRMRNISLAS (426 aa). Residues 8486-8882 are adenylation 7; it reads QKSVHARPDA…GRRDTQVKIR (397 aa). One can recognise a Carrier 8 domain in the interval 9015-9091; that stretch reads QPATDAERQL…DLAKTIQDSE (77 aa). O-(pantetheine 4'-phosphoryl)serine is present on S9052. Residues 9136–9535 are condensation 8; it reads EDVYPCTPLQ…FAAIFRQLCD (400 aa). The segment at 9583 to 9974 is adenylation 8; the sequence is KNPHAIAVNA…GRRDNQMKIR (392 aa). One can recognise a Carrier 9 domain in the interval 10110–10186; sequence EPATPMEMQL…GLAALIQKQI (77 aa). Residue S10147 is modified to O-(pantetheine 4'-phosphoryl)serine. Residues 10186–10208 are disordered; sequence IDEEEEYDDSEEEEEDDEEEVRE. Residues 10187–10206 show a composition bias toward acidic residues; sequence DEEEEYDDSEEEEEDDEEEV. Residues 10240–10662 form a condensation 9 region; sequence VEDVYPCTPL…VLSETDKTKI (423 aa). The tract at residues 10683–11082 is adenylation 9; it reads KQAIERPNAP…GRRDTQIKIR (400 aa). Positions 11217–11293 constitute a Carrier 10 domain; that stretch reads EPATGMERHL…DLARETESQG (77 aa). S11254 is modified (O-(pantetheine 4'-phosphoryl)serine). The segment at 11329–11725 is condensation 10; that stretch reads EDVYPCTPLQ…ETIFQQLSSV (397 aa). The segment at 11770–12165 is adenylation 10; it reads FKRTADKQPE…GRRDTQIKVR (396 aa). Positions 12298–12374 constitute a Carrier 11 domain; sequence EPSTEMERRI…DLAAAVQGRI (77 aa). Position 12335 is an O-(pantetheine 4'-phosphoryl)serine (S12335). Residues 12418 to 12830 form a condensation 11 region; that stretch reads EDVYPATPLQ…IQDIEMVSEQ (413 aa). The segment at 12861–13249 is adenylation 11; sequence SRADEIAICA…GRRDTQIKIR (389 aa). Positions 13383–13459 constitute a Carrier 12 domain; the sequence is MPGTVQEEQL…QLGQKVKEAV (77 aa). Position 13420 is an O-(pantetheine 4'-phosphoryl)serine (S13420). Residues 13476 to 13901 are epimerase 4; that stretch reads APIQQMFFEQ…LKDMTSTLLQ (426 aa). The condensation 12 stretch occupies residues 13940-14369; that stretch reads EDILPCSPIQ…SIVGEHDLQQ (430 aa). The adenylation 12 stretch occupies residues 14390–14789; it reads RDAAHRTPDA…GRGDGQIKIR (400 aa). A Carrier 13 domain is found at 14916–14992; it reads LPASADEGAL…DMASVASAAR (77 aa). Residue S14953 is modified to O-(pantetheine 4'-phosphoryl)serine. The interval 15062 to 15433 is condensation 13; that stretch reads QHAVDLAALK…DIMVRLASQQ (372 aa). Disordered stretches follow at residues 15434–15511 and 15617–15639; these read EGTV…ENRQ and VQTN…KGHI. Low complexity predominate over residues 15455–15472; sequence NGTNGSNGDGTDAANGIG. Basic and acidic residues predominate over residues 15482-15494; the sequence is AVEKSSGDAEVEK. Over residues 15495 to 15511 the composition is skewed to polar residues; sequence VSTNGHADNNTSAENRQ.

This sequence belongs to the NRP synthetase family.

Its pathway is antifungal biosynthesis. Its function is as follows. Nonribosomal peptide synthetase; part of the gene cluster that mediates the biosynthesis of the antifungal antibiotic FR901469, an inhibitor of beta-1,3-glucansynthase, exerting antifungal activity against the pathogenes Candida albicans and Aspergillus fumigatus. FR901469 is a cyclic depsipeptide containing 12 amino acid residues and a fatty acid chain. The NRPS frbI contains 12 modules responsible for the formation of the depsipeptide backbone which is denoted as Acyl-Thr-Ala-Tyr-Val-4OHPro-Thr-Thr-3OHPro-threo3OHGln-Gly-Thr-Orn-OH (C71H116N14O23). The PKS frbB is probably involved in the production of the hydrocarbon chain, and the acyl-CoA ligase frbC might be involved in the transport of the chain to the peptide ptoduct of frbI. Because FR901469 contains 3 hydroxylated amino acid residues, the 3 oxygenases frbA, frbH, and frbJ might be participating in amino acid hydroxylation. As no thioesterase domains were detected in frbI or frbB, the thioesterases frbD and frbE may instead release and cyclize the products of the NRPS and PKS, respectively. The polypeptide is FR901469 synthetase (Dothideomycetidae sp. (strain 11243) (Fungal sp. (strain No.11243))).